Here is a 281-residue protein sequence, read N- to C-terminus: MAVKHYKPVTNGRRNMSSLDYSKNLSGHAPEKSLLVILKKNSGRNNQGKITVRHQGGRVKRYYRIIDFKRNKDDIPATVKSIEYDPNRSANICLLAYADGEKRYILAPEGIKVGQKVVSGNNVDILVGNSLPLSNIPEGTFVHNVEMQPGGGGIIARSAGTSAQILGKDDDGKYVVLRLKSGEMRRILARCRATIGTVGNGEHSLVLLGKAGRSRHLGVRPTVRGSVMNPIDHPHGGGVSKQPIGRKAPLTPWGKKALGVKTRKTKKSSTKLILRRRKDSK.

2 disordered regions span residues 1–23 and 224–281; these read MAVKHYKPVTNGRRNMSSLDYSK and RGSV…KDSK. Residues 12 to 23 are compositionally biased toward polar residues; the sequence is GRRNMSSLDYSK. The span at 261–281 shows a compositional bias: basic residues; it reads KTRKTKKSSTKLILRRRKDSK.

Belongs to the universal ribosomal protein uL2 family. As to quaternary structure, part of the 50S ribosomal subunit. Forms a bridge to the 30S subunit in the 70S ribosome.

Functionally, one of the primary rRNA binding proteins. Required for association of the 30S and 50S subunits to form the 70S ribosome, for tRNA binding and peptide bond formation. It has been suggested to have peptidyltransferase activity; this is somewhat controversial. Makes several contacts with the 16S rRNA in the 70S ribosome. The sequence is that of Large ribosomal subunit protein uL2 from Mycoplasmopsis agalactiae (strain NCTC 10123 / CIP 59.7 / PG2) (Mycoplasma agalactiae).